Reading from the N-terminus, the 71-residue chain is Palustrin-2AJ2 (71 aa).

Positions 1 to 22 (MFTLKKPLLVLLFLGTVSLSLC) are cleaved as a signal peptide. The propeptide occupies 23–40 (EQERAADDDEGEVIEEEV). Cys-65 and Cys-71 form a disulfide bridge.

As to expression, expressed by the skin glands.

The protein localises to the secreted. In terms of biological role, displays broad-spectrum antibacterial activity against a range of Gram-positive and Gram-negative bacteria. Has low hemolytic activity, low cytotoxicity and low antioxidant activity. In Amolops jingdongensis (Chinese torrent frog), this protein is Palustrin-2AJ2.